We begin with the raw amino-acid sequence, 293 residues long: tRNA pseudouridine synthase B (293 aa).

Asp39 functions as the Nucleophile in the catalytic mechanism.

This sequence belongs to the pseudouridine synthase TruB family. Type 1 subfamily.

The enzyme catalyses uridine(55) in tRNA = pseudouridine(55) in tRNA. Responsible for synthesis of pseudouridine from uracil-55 in the psi GC loop of transfer RNAs. This Thermobifida fusca (strain YX) protein is tRNA pseudouridine synthase B.